We begin with the raw amino-acid sequence, 177 residues long: Large ribosomal subunit protein uL6 (177 aa).

This sequence belongs to the universal ribosomal protein uL6 family. As to quaternary structure, part of the 50S ribosomal subunit.

In terms of biological role, this protein binds to the 23S rRNA, and is important in its secondary structure. It is located near the subunit interface in the base of the L7/L12 stalk, and near the tRNA binding site of the peptidyltransferase center. The protein is Large ribosomal subunit protein uL6 of Agrobacterium fabrum (strain C58 / ATCC 33970) (Agrobacterium tumefaciens (strain C58)).